Here is a 201-residue protein sequence, read N- to C-terminus: Recombination protein RecR (201 aa).

The C4-type zinc-finger motif lies at 60–75; that stretch reads CKTCGNIDTQNPCTVC. One can recognise a Toprim domain in the interval 83-178; the sequence is AIIVVVADVA…KVTRLAHGVP (96 aa).

This sequence belongs to the RecR family.

In terms of biological role, may play a role in DNA repair. It seems to be involved in an RecBC-independent recombinational process of DNA repair. It may act with RecF and RecO. The polypeptide is Recombination protein RecR (Rhodopseudomonas palustris (strain BisA53)).